Here is a 404-residue protein sequence, read N- to C-terminus: Calcium/calmodulin-dependent protein kinase cmkB (404 aa).

The Protein kinase domain maps to 18–279 (YKTGKTLGAG…AHQALQHPWI (262 aa)). Residues 24 to 32 (LGAGLYSVV) and Lys47 contribute to the ATP site. Asp141 functions as the Proton acceptor in the catalytic mechanism. Position 179 is a phosphothreonine; by cmkC (Thr179). The tract at residues 279–322 (INPPYDTTDDLGSGEDLLPNIKKNFNARRTLHKAIDTVRAINKL) is autoinhibitory domain. Residues 301–323 (KNFNARRTLHKAIDTVRAINKLR) form a calmodulin-binding region. The tract at residues 336–404 (VDPKPEHVNG…WSRTAPRSER (69 aa)) is disordered. 2 stretches are compositionally biased toward basic and acidic residues: residues 338–370 (PKPE…DSRS) and 379–389 (QIREQERKVKE).

Belongs to the protein kinase superfamily. CAMK Ser/Thr protein kinase family. CaMK subfamily. Phosphorylated by cmkC on Thr-179.

The enzyme catalyses L-seryl-[protein] + ATP = O-phospho-L-seryl-[protein] + ADP + H(+). It carries out the reaction L-threonyl-[protein] + ATP = O-phospho-L-threonyl-[protein] + ADP + H(+). Activated by Ca(2+)/calmodulin. Binding of calmodulin results in conformational change that relieves intrasteric autoinhibition and allows phosphorylation of Thr-179 within the activation loop by cmkC. Calcium/calmodulin-dependent protein kinase that operates in the calcium-triggered CaMKK-CaMK1 signaling cascade. Required in G1-phase of the cell cycle for proper timing of the initial nuclear division after germination, but not for subsequent mitoses. Required for the normal temporal regulation of nimX activity. The polypeptide is Calcium/calmodulin-dependent protein kinase cmkB (Emericella nidulans (Aspergillus nidulans)).